The chain runs to 192 residues: ADP-ribosylation factor-like protein 4C (192 aa).

Residue Gly-2 is the site of N-myristoyl glycine attachment. GTP contacts are provided by residues 20 to 27 (GLDSAGKT), 68 to 72 (DVGGQ), and 127 to 130 (NKQD).

The protein belongs to the small GTPase superfamily. Arf family. In terms of assembly, interacts with CYTH2. Interacts with alpha tubulin; interaction is independent on the ARL4C GTP or GDP binding status. As to expression, expressed in several tumor cell lines (at protein level). Expressed in lung, brain, leukocytes and placenta.

It is found in the cell projection. Its subcellular location is the filopodium. The protein localises to the cell membrane. The protein resides in the cytoplasm. In terms of biological role, small GTP-binding protein which cycles between an inactive GDP-bound and an active GTP-bound form, and the rate of cycling is regulated by guanine nucleotide exchange factors (GEF) and GTPase-activating proteins (GAP). GTP-binding protein that does not act as an allosteric activator of the cholera toxin catalytic subunit. May be involved in transport between a perinuclear compartment and the plasma membrane, apparently linked to the ABCA1-mediated cholesterol secretion pathway. Recruits CYTH1, CYTH2, CYTH3 and CYTH4 to the plasma membrane in the GDP-bound form. Regulates the microtubule-dependent intracellular vesicular transport from early endosome to recycling endosome process. This Homo sapiens (Human) protein is ADP-ribosylation factor-like protein 4C (ARL4C).